Reading from the N-terminus, the 145-residue chain is METIFDYNQIKQIIPHRQPFLLIDRVVEYEEGKRCVGLKQVSGNEPFFQGHFPDYAVMPGVLITEALAQTGAVAMLNSEENKGKIALFAGIDKCRFKKQVTPGDTLMLEVEITKIKGPIGKGTAKATVDGQLACSCELTFAIQNA.

His51 is a catalytic residue.

This sequence belongs to the thioester dehydratase family. FabZ subfamily.

It is found in the cytoplasm. The enzyme catalyses a (3R)-hydroxyacyl-[ACP] = a (2E)-enoyl-[ACP] + H2O. In terms of biological role, involved in unsaturated fatty acids biosynthesis. Catalyzes the dehydration of short chain beta-hydroxyacyl-ACPs and long chain saturated and unsaturated beta-hydroxyacyl-ACPs. This chain is 3-hydroxyacyl-[acyl-carrier-protein] dehydratase FabZ, found in Staphylococcus haemolyticus (strain JCSC1435).